The chain runs to 374 residues: Mitochondrial inner membrane protein oxa1-1 (374 aa).

The helical transmembrane segment at 77 to 97 threads the bilayer; the sequence is TINVYAGAPWWVSIILTTLGV. Over 98-159 the chain is Mitochondrial intermembrane; sequence RLALTPVMIA…GIYLKHNVNP (62 aa). The chain crosses the membrane as a helical span at residues 160–180; sequence FAIFILPLTQSAVFFSFFYAI. Residues 181-242 are Mitochondrial matrix-facing; it reads RKMSRLSVDG…TIGNSTNWRT (62 aa). A helical transmembrane segment spans residues 243 to 263; sequence FFFLCCLLSPLLTAKLPAAIF. Residues 264-374 lie on the Mitochondrial intermembrane side of the membrane; the sequence is MYWIPSSLFN…SKKNSKKQSN (111 aa).

This sequence belongs to the OXA1/ALB3/YidC family.

Its subcellular location is the mitochondrion inner membrane. In terms of biological role, required for the insertion of integral membrane proteins into the mitochondrial inner membrane. Essential for the activity and assembly of cytochrome c oxidase. Not essential for viability, while oxa102 is essential. When both genes are deleted the cell is non-viable, suggesting that oxa101 act as a back-up for oxa102. This chain is Mitochondrial inner membrane protein oxa1-1 (oxa101), found in Schizosaccharomyces pombe (strain 972 / ATCC 24843) (Fission yeast).